A 655-amino-acid chain; its full sequence is p-hydroxybenzoic acid efflux pump subunit AaeB (655 aa).

The next 11 membrane-spanning stretches (helical) occupy residues 13–33 (FAVKLACAIVLALFIGFHFQL), 38–58 (WAVLTAAIVAAGPAFAAGGEP), 69–89 (LRIIGTFIGCIAALIIIISMI), 93–113 (LLMILVCCVWAGFCTWISSLV), 121–141 (WGLSGYTALIIVITIQMEPLL), 152–172 (EIVIGIGCAILADLLFSPRSI), 370–390 (LFWLWTGWTSGNGAMVMIAVV), 407–427 (FIYGTLAALPLGLLYFLVIIP), 431–451 (QSMLLLCLSLAVLGFFIGIEV), 459–479 (MGALASTINIIVLDNPMTFHF), and 482–502 (FLDSALGQIVGCMLAFIVILL).

It belongs to the aromatic acid exporter ArAE (TC 2.A.85) family.

It localises to the cell inner membrane. Forms an efflux pump with AaeA. Could function as a metabolic relief valve, allowing to eliminate certain compounds when they accumulate to high levels in the cell. The polypeptide is p-hydroxybenzoic acid efflux pump subunit AaeB (Salmonella heidelberg (strain SL476)).